The sequence spans 374 residues: Cytochrome b (374 aa).

4 helical membrane-spanning segments follow: residues Phe-25 to Ile-45, Trp-69 to Ile-90, Trp-105 to Leu-125, and Phe-170 to Ile-190. Heme b is bound by residues His-75 and His-89. Heme b is bound by residues His-174 and His-188. His-193 contacts a ubiquinone. Helical transmembrane passes span Tyr-218 to Thr-238, Leu-280 to His-300, Leu-312 to Thr-332, and Phe-339 to Pro-358.

It belongs to the cytochrome b family. As to quaternary structure, the cytochrome bc1 complex contains 3 respiratory subunits (MT-CYB, CYC1 and UQCRFS1), 2 core proteins (UQCRC1 and UQCRC2) and probably 6 low-molecular weight proteins. The cofactor is heme b.

It is found in the mitochondrion inner membrane. Functionally, component of the ubiquinol-cytochrome c reductase complex (complex III or cytochrome b-c1 complex) that is part of the mitochondrial respiratory chain. The b-c1 complex mediates electron transfer from ubiquinol to cytochrome c. Contributes to the generation of a proton gradient across the mitochondrial membrane that is then used for ATP synthesis. The protein is Cytochrome b (MT-CYB) of Calliophis bivirgatus (Blue Malaysian coral snake).